The chain runs to 226 residues: Enolase-phosphatase E1 (226 aa).

This sequence belongs to the HAD-like hydrolase superfamily. MasA/MtnC family. In terms of assembly, monomer. Mg(2+) serves as cofactor.

It catalyses the reaction 5-methylsulfanyl-2,3-dioxopentyl phosphate + H2O = 1,2-dihydroxy-5-(methylsulfanyl)pent-1-en-3-one + phosphate. Its pathway is amino-acid biosynthesis; L-methionine biosynthesis via salvage pathway; L-methionine from S-methyl-5-thio-alpha-D-ribose 1-phosphate: step 3/6. It functions in the pathway amino-acid biosynthesis; L-methionine biosynthesis via salvage pathway; L-methionine from S-methyl-5-thio-alpha-D-ribose 1-phosphate: step 4/6. Its function is as follows. Bifunctional enzyme that catalyzes the enolization of 2,3-diketo-5-methylthiopentyl-1-phosphate (DK-MTP-1-P) into the intermediate 2-hydroxy-3-keto-5-methylthiopentenyl-1-phosphate (HK-MTPenyl-1-P), which is then dephosphorylated to form the acireductone 1,2-dihydroxy-3-keto-5-methylthiopentene (DHK-MTPene). This Shewanella baltica (strain OS223) protein is Enolase-phosphatase E1.